A 79-amino-acid chain; its full sequence is DNYWCPQSGEAFECFESDPNAKFCLNSGKTSVVICSKCRKKYEFCRNGLKVSKRPDYDCGAGWESTPCTGDNSAVPAVF.

Contains four disulfide bonds. As to expression, growth-controlling neurosecretory light green cells, in the cerebral ganglia of the CNS.

Its subcellular location is the secreted. Anti-gonadotropic neuropeptide. It also decreases the binding capacity of calfluxin to membrane-bound receptors of the albumen gland. This leads to inhibition of the reproductive activities of the infected snail. This chain is Schistosomin, found in Lymnaea stagnalis (Great pond snail).